We begin with the raw amino-acid sequence, 127 residues long: Major sperm protein 152 (127 aa).

Threonine 2 is subject to N-acetylthreonine. In terms of domain architecture, MSP spans 9-126; that stretch reads DIQTQPGTKI…RRKNLPIEYN (118 aa).

As to expression, sperm.

The protein localises to the cell projection. It localises to the pseudopodium. It is found in the cytoplasm. The protein resides in the cytoskeleton. In terms of biological role, central component in molecular interactions underlying sperm crawling. Forms an extensive filament system that extends from sperm villipoda, along the leading edge of the pseudopod. The sequence is that of Major sperm protein 152 (msp-152) from Caenorhabditis elegans.